Here is a 363-residue protein sequence, read N- to C-terminus: D-xylulose reductase (363 aa).

3 residues coordinate Zn(2+): Cys-41, His-66, and Glu-159. 183 to 188 (GAGPVG) contacts NAD(+).

This sequence belongs to the zinc-containing alcohol dehydrogenase family. The cofactor is Zn(2+).

It carries out the reaction xylitol + NAD(+) = D-xylulose + NADH + H(+). Its pathway is carbohydrate degradation; L-arabinose degradation via L-arabinitol; D-xylulose 5-phosphate from L-arabinose (fungal route): step 4/5. This Scheffersomyces stipitis (strain ATCC 58785 / CBS 6054 / NBRC 10063 / NRRL Y-11545) (Yeast) protein is D-xylulose reductase (XYL2).